A 2798-amino-acid chain; its full sequence is Nipped-B-like protein (2798 aa).

Polar residues-rich tracts occupy residues 128 to 173 (LSQN…QNSP) and 191 to 208 (HPSSYTTHPQMQQASVSS). The interval 128–338 (LSQNSMHSSP…IKLGKDEKDQ (211 aa)) is disordered. Phosphoserine occurs at positions 150 and 162. Residues 234–249 (HHADNPRHGSSDDYLH) show a composition bias toward basic and acidic residues. A phosphoserine mark is found at serine 243, serine 256, serine 274, serine 280, serine 284, serine 301, serine 306, serine 318, and serine 350. Over residues 482–500 (RESAIERERFSKEVQDKDK) the composition is skewed to basic and acidic residues. The interval 482–940 (RESAIERERF…NKAEFPSYLL (459 aa)) is disordered. Residues 523–534 (PASQETGSTGNG) are compositionally biased toward polar residues. 5 stretches are compositionally biased toward basic and acidic residues: residues 562 to 572 (DSIKKPEETKQ), 593 to 625 (PENHPETPKKKSDPELSKSEMKQNESRLSESKP), 634 to 663 (KSNESKLETKTETPTEELKQNENKTTESKQ), 672 to 685 (KQNENRPCDTKPND), and 694 to 899 (ENTK…DTNK). Residues threonine 713 and threonine 746 each carry the phosphothreonine modification. At serine 906 the chain carries Phosphoserine. Over residues 908–933 (NSKDDKRTEGNRSKVDSNKAHTDNKA) the composition is skewed to basic and acidic residues. Residues 990–1003 (NKGAKPVVVLQKLS) carry the PxVxL motif motif. 2 disordered regions span residues 1011-1041 (IKDREEKSRSSLKSIKNKPSKSNKGSIDQSV) and 1054-1186 (ESTM…TPEE). Lysine 1076 is modified (N6-acetyllysine). A phosphoserine mark is found at serine 1083, serine 1084, and serine 1090. The segment covering 1083-1094 (SSDEDNDSDEAF) has biased composition (acidic residues). Over residues 1103–1133 (KDDDKAWEYEERDRRSSGDHRRSGHSHDGRR) the composition is skewed to basic and acidic residues. Phosphoserine occurs at positions 1144, 1146, and 1148. Tyrosine 1153 carries the phosphotyrosine modification. Residue serine 1154 is modified to Phosphoserine. The span at 1165–1176 (KMKKKEKQKKRK) shows a compositional bias: basic residues. Threonine 1183 bears the Phosphothreonine mark. The residue at position 1191 (serine 1191) is a Phosphoserine. Over residues 1685–1705 (AMKSQKDEESSDATHHAKELE) the composition is skewed to basic and acidic residues. Residues 1685-1706 (AMKSQKDEESSDATHHAKELET) form a disordered region. HEAT repeat units lie at residues 1761-1799 (AQSFDIYLTQILRVLGENAIAVRTKAMKCLSEVVAVDPS), 1837-1875 (PQLAEQYYDMLIERILDTGISVRKRVIKILRDICIEQPT), 1939-1978 (YDWFEQLLQNLLKSEEDSSYKPVKKACTQLVDNLVEHILK), 2221-2261 (VNLK…LKEM), and 2307-2345 (LIHPVQCVPYLIAMGTDPEPAMRNKADQQLVEIDKKYAG). Positions 2467-2483 (VKDKRKERKTSPAKENE) are enriched in basic and acidic residues. 2 disordered regions span residues 2467 to 2514 (VKDK…DDIN) and 2645 to 2690 (TSLL…DSTE). Phosphoserine is present on residues serine 2487, serine 2503, serine 2505, serine 2507, serine 2509, serine 2646, and serine 2652. Residues 2504–2513 (ESDSDSEDDI) show a composition bias toward acidic residues. Phosphothreonine is present on threonine 2661. At serine 2666 the chain carries Phosphoserine.

It belongs to the SCC2/Nipped-B family. As to quaternary structure, heterodimerizes with MAU2/SCC4 to form the cohesin loading complex. The NIPBL-MAU2 heterodimer interacts with the cohesin complex composed of SMC1A/B and SMC3 heterodimer, RAD21 and STAG1/SA1. NIPBL directly contacts all members of the complex, RAD21, SMC1A/B, SMC3 and STAG1. Interacts directly (via PxVxL motif) with CBX3 and CBX5. Interacts with ZNF609 (via N-terminus). Interacts with the multiprotein complex Integrator. Interacts with BRD4. Spermatocytes and oocytes (at protein level).

Its subcellular location is the nucleus. The protein resides in the chromosome. Functionally, plays an important role in the loading of the cohesin complex on to DNA. Forms a heterodimeric complex (also known as cohesin loading complex) with MAU2/SCC4 which mediates the loading of the cohesin complex onto chromatin. Plays a role in cohesin loading at sites of DNA damage. Its recruitment to double-strand breaks (DSBs) sites occurs in a CBX3-, RNF8- and RNF168-dependent manner whereas its recruitment to UV irradiation-induced DNA damage sites occurs in a ATM-, ATR-, RNF8- and RNF168-dependent manner. Along with ZNF609, promotes cortical neuron migration during brain development by regulating the transcription of crucial genes in this process. Preferentially binds promoters containing paused RNA polymerase II. Up-regulates the expression of SEMA3A, NRP1, PLXND1 and GABBR2 genes, among others. The polypeptide is Nipped-B-like protein (Nipbl) (Mus musculus (Mouse)).